The sequence spans 548 residues: Hydroxylamine reductase (548 aa).

Residues Cys3, Cys6, Cys15, and Cys21 each contribute to the [4Fe-4S] cluster site. Residues His240, Glu264, Cys308, Cys402, Cys430, Cys455, Glu490, and Lys492 each coordinate hybrid [4Fe-2O-2S] cluster. Residue Cys402 is modified to Cysteine persulfide.

It belongs to the HCP family. [4Fe-4S] cluster is required as a cofactor. Requires hybrid [4Fe-2O-2S] cluster as cofactor.

Its subcellular location is the cytoplasm. It catalyses the reaction A + NH4(+) + H2O = hydroxylamine + AH2 + H(+). Its function is as follows. Catalyzes the reduction of hydroxylamine to form NH(3) and H(2)O. The sequence is that of Hydroxylamine reductase from Parabacteroides distasonis (strain ATCC 8503 / DSM 20701 / CIP 104284 / JCM 5825 / NCTC 11152).